We begin with the raw amino-acid sequence, 148 residues long: SsrA-binding protein (148 aa).

Residues 129-142 (ETEKKRDWEREKAR) show a composition bias toward basic and acidic residues. Positions 129 to 148 (ETEKKRDWEREKARIMRAGT) are disordered.

It belongs to the SmpB family.

It is found in the cytoplasm. Required for rescue of stalled ribosomes mediated by trans-translation. Binds to transfer-messenger RNA (tmRNA), required for stable association of tmRNA with ribosomes. tmRNA and SmpB together mimic tRNA shape, replacing the anticodon stem-loop with SmpB. tmRNA is encoded by the ssrA gene; the 2 termini fold to resemble tRNA(Ala) and it encodes a 'tag peptide', a short internal open reading frame. During trans-translation Ala-aminoacylated tmRNA acts like a tRNA, entering the A-site of stalled ribosomes, displacing the stalled mRNA. The ribosome then switches to translate the ORF on the tmRNA; the nascent peptide is terminated with the 'tag peptide' encoded by the tmRNA and targeted for degradation. The ribosome is freed to recommence translation, which seems to be the essential function of trans-translation. This is SsrA-binding protein from Burkholderia lata (strain ATCC 17760 / DSM 23089 / LMG 22485 / NCIMB 9086 / R18194 / 383).